Reading from the N-terminus, the 99-residue chain is Beta-defensin 127 (99 aa).

Positions 1-20 (MGLFMIIAILLFQKPTVTEQ) are cleaved as a signal peptide. Disulfide bonds link Cys24-Cys53, Cys33-Cys47, and Cys37-Cys54. Residues 66–99 (ITKPPRPKPATLALTLQDYVTIIENFPSLKTQST) constitute a propeptide that is removed on maturation.

The protein belongs to the beta-defensin family.

It is found in the secreted. Has antibacterial activity. The sequence is that of Beta-defensin 127 (DEFB127) from Homo sapiens (Human).